The sequence spans 448 residues: MSLSQAKYLPQEIIRRKRDGEVLTNDEINFFIQGVANNTVSEGQIAAFAMAIFFREMTMPERIALTCAMRDSGMVIDWSHMNFDGPIVDKHSTGGVGDVTSLMLGPMVAACGGYVPMISGRGLGHTGGTLDKLEAIPGYNITPTNDVFGKVTKQAGVAIIGQTGDLAPADKRVYATRDITATVDNISLITASILSKKLAAGLESLVMDVKVGSGAFMPTYEASEELAKSIVAVANGAGTNTTAILTDMNQVLASSAGNAVEVREAVRFLTGEYRNPRLLEVTMASCAEMLVLGKLAKDTAQAREKLQAVLDNGQAADRFGKMVAGLGGPSDFVENYDKYLAKAEIIRPVYAQQSGVISAMDTRAIGMAVVGMGGGRRVATDRIDYAVGFDQFIRLGEIADSNKPLAMIHARNEEQWQQAANALQSAIKVGGDYLPTPDVYRQIRAQDV.

The protein belongs to the thymidine/pyrimidine-nucleoside phosphorylase family. Homodimer.

The catalysed reaction is thymidine + phosphate = 2-deoxy-alpha-D-ribose 1-phosphate + thymine. It participates in pyrimidine metabolism; dTMP biosynthesis via salvage pathway; dTMP from thymine: step 1/2. Functionally, the enzymes which catalyze the reversible phosphorolysis of pyrimidine nucleosides are involved in the degradation of these compounds and in their utilization as carbon and energy sources, or in the rescue of pyrimidine bases for nucleotide synthesis. The protein is Thymidine phosphorylase of Vibrio cholerae serotype O1 (strain ATCC 39315 / El Tor Inaba N16961).